A 731-amino-acid polypeptide reads, in one-letter code: Ribonuclease R (731 aa).

An RNB domain is found at 260–589; the sequence is RTDLRHFPFF…LHRVIKYLLF (330 aa). Positions 647-728 constitute an S1 motif domain; sequence GCILNGVISN…NEKKIELSLY (82 aa).

This sequence belongs to the RNR ribonuclease family. RNase R subfamily. As to quaternary structure, monomer.

It is found in the cytoplasm. The enzyme catalyses Exonucleolytic cleavage in the 3'- to 5'-direction to yield nucleoside 5'-phosphates.. Its function is as follows. 3'-5' exoribonuclease that releases 5'-nucleoside monophosphates and is involved in maturation of structured RNAs. This Buchnera aphidicola subsp. Acyrthosiphon pisum (strain APS) (Acyrthosiphon pisum symbiotic bacterium) protein is Ribonuclease R.